Consider the following 403-residue polypeptide: E2F transcription factor-like E2FE (403 aa).

Residues 34-99 mediate DNA binding; the sequence is RKQKSLGLLC…RAKNQYTWKG (66 aa). The segment at 128–167 is disordered; that stretch reads VKGSDDEDDDEESSQPHSSSQTDSSKPGSLPQSSDPSKID. Positions 142–152 are enriched in low complexity; the sequence is QPHSSSQTDSS. Polar residues predominate over residues 153–163; sequence KPGSLPQSSDP. A DNA-binding region spans residues 169–250; that stretch reads RREKSLGLLT…SRKPAFKWLG (82 aa). A disordered region spans residues 282–319; that stretch reads VKRSKSSSSSQENATERRLKMKKHSTPESSYNKSFDVH.

The protein belongs to the E2F/DP family. In terms of tissue distribution, expressed exclusively in mitotically dividing cells. Highly expressed in young leaves and mature flowers. Lower expression in young stalk and in young and mature flowers.

It localises to the nucleus. In terms of biological role, inhibitor of E2F-dependent activation of gene expression. Binds specifically the E2 recognition site without interacting with DP proteins and prevents transcription activation by E2F/DP heterodimers. Controls the timing of endocycle onset and inhibits endoreduplication. This is E2F transcription factor-like E2FE (E2FE) from Arabidopsis thaliana (Mouse-ear cress).